Consider the following 428-residue polypeptide: Enolase (428 aa).

Position 165 (glutamine 165) interacts with (2R)-2-phosphoglycerate. Glutamate 207 functions as the Proton donor in the catalytic mechanism. Aspartate 244, glutamate 285, and aspartate 312 together coordinate Mg(2+). (2R)-2-phosphoglycerate is bound by residues lysine 337, arginine 366, serine 367, and lysine 388. Lysine 337 functions as the Proton acceptor in the catalytic mechanism.

It belongs to the enolase family. Component of the RNA degradosome, a multiprotein complex involved in RNA processing and mRNA degradation. It depends on Mg(2+) as a cofactor.

Its subcellular location is the cytoplasm. It localises to the secreted. The protein resides in the cell surface. It carries out the reaction (2R)-2-phosphoglycerate = phosphoenolpyruvate + H2O. The protein operates within carbohydrate degradation; glycolysis; pyruvate from D-glyceraldehyde 3-phosphate: step 4/5. Functionally, catalyzes the reversible conversion of 2-phosphoglycerate (2-PG) into phosphoenolpyruvate (PEP). It is essential for the degradation of carbohydrates via glycolysis. This chain is Enolase, found in Coxiella burnetii (strain CbuK_Q154) (Coxiella burnetii (strain Q154)).